Here is a 1483-residue protein sequence, read N- to C-terminus: ABC multidrug transporter atrA (1483 aa).

Basic and acidic residues predominate over residues 1 to 19 (MASHKKSEDPLVVKDRQEQ). The tract at residues 1–92 (MASHKKSEDP…NDPAVDPQGP (92 aa)) is disordered. Residue asparagine 32 is glycosylated (N-linked (GlcNAc...) asparagine). The segment covering 71-82 (PTRTSTLATISE) has biased composition (polar residues). Asparagine 123 and asparagine 322 each carry an N-linked (GlcNAc...) asparagine glycan. An ABC transporter 1 domain is found at 147–398 (FRIGEMMKNR…FERQGWECPQ (252 aa)). Transmembrane regions (helical) follow at residues 512–532 (TVST…VFYG), 539–559 (GFTA…LIAM), 595–615 (IPVK…LAGL), 620–640 (GQFF…SAVF), and 654–674 (MGLA…VLPV). A glycan (N-linked (GlcNAc...) asparagine) is linked at asparagine 718. The helical transmembrane segment at 759-779 (FGILIAFLVGFMMIYFIATEL) threads the bilayer. An N-linked (GlcNAc...) asparagine glycan is attached at asparagine 780. The ABC transporter 2 domain occupies 840 to 1083 (FTWRDVCYDI…LLNYFESNGA (244 aa)). Residue 876 to 883 (GVSGAGKT) participates in ATP binding. Residues asparagine 947 and asparagine 1146 are each glycosylated (N-linked (GlcNAc...) asparagine). A run of 5 helical transmembrane segments spans residues 1179 to 1199 (YIAS…FSFF), 1215 to 1235 (LFML…LFVT), 1254 to 1274 (AFLI…GILT), 1293 to 1313 (LVLL…HMAI), and 1320 to 1340 (ETAS…CGVM). N-linked (GlcNAc...) asparagine glycosylation is present at asparagine 1413. A helical transmembrane segment spans residues 1444–1464 (FGLMWVYIVFNIFLATMLYYT). The N-linked (GlcNAc...) asparagine glycan is linked to asparagine 1471.

It belongs to the ABC transporter superfamily. ABCG family. PDR (TC 3.A.1.205) subfamily.

It is found in the cell membrane. The enzyme catalyses (R)-miconazole(in) + ATP + H2O = (R)-miconazole(out) + ADP + phosphate + H(+). Its function is as follows. Pleiotropic ABC efflux transporter involved in the basal level of azole susceptibility. Confers resistance to miconazole and clotrimazole. This is ABC multidrug transporter atrA from Aspergillus oryzae (strain ATCC 42149 / RIB 40) (Yellow koji mold).